The following is a 928-amino-acid chain: Nitrogen network kinase 1 (928 aa).

Polar residues predominate over residues 1–12 (MFTSQRQLRQNG). Disordered stretches follow at residues 1-43 (MFTS…SYGR) and 81-118 (HEHP…LELG). Low complexity predominate over residues 13–29 (SPMSSSRSSQHSSGTAS). Polar residues-rich tracts occupy residues 30–40 (PISDSPASNRS) and 86–107 (RSTL…SQVN). 2 positions are modified to phosphoserine: serine 178 and serine 179. Residues 374-394 (ANDDNINSRNTPNNSNDTYVN) form a disordered region. Over residues 375-391 (NDDNINSRNTPNNSNDT) the composition is skewed to low complexity. Phosphoserine occurs at positions 405 and 426. One can recognise a Protein kinase domain in the interval 449 to 912 (HRLGKIIGFG…WKLKRIEEVL (464 aa)). ATP contacts are provided by residues 455 to 463 (IGFGAWGII) and lysine 478. Aspartate 580 acts as the Proton acceptor in catalysis. Disordered stretches follow at residues 670 to 741 (ENRK…KYIG) and 767 to 813 (YDSP…SGSS). Residues 683-696 (VSSSSHSLKHLNQP) show a composition bias toward polar residues. Position 737 is a phosphoserine (serine 737). At tyrosine 739 the chain carries Phosphotyrosine. Positions 769 to 813 (SPDSSQSEISAASSSSSNLSSLSSSTKASAVTNSGVTTSSPSGSS) are enriched in low complexity.

Belongs to the protein kinase superfamily. Ser/Thr protein kinase family. In terms of assembly, interacts with URE2 and GDH2. Also interacts with the TORC1 kinase complex.

The protein localises to the cytoplasm. The enzyme catalyses L-seryl-[protein] + ATP = O-phospho-L-seryl-[protein] + ADP + H(+). It catalyses the reaction L-threonyl-[protein] + ATP = O-phospho-L-threonyl-[protein] + ADP + H(+). Serine/threonine-protein kinase involved in the phosphorylation of the NAD(+)-dependent glutamate dehydrogenase GDH2. When overexpressed, confers hypersensitivity to rapamycin and induces rapid nuclear accumulation of GLN3 to activate the transcription of nitrogen-regulated genes. This is Nitrogen network kinase 1 (NNK1) from Saccharomyces cerevisiae (strain ATCC 204508 / S288c) (Baker's yeast).